A 450-amino-acid chain; its full sequence is Phosphoglucosamine mutase (450 aa).

Ser101 acts as the Phosphoserine intermediate in catalysis. Residues Ser101, Asp241, Asp243, and Asp245 each contribute to the Mg(2+) site. Phosphoserine is present on Ser101.

Belongs to the phosphohexose mutase family. Mg(2+) is required as a cofactor. Activated by phosphorylation.

It catalyses the reaction alpha-D-glucosamine 1-phosphate = D-glucosamine 6-phosphate. Its function is as follows. Catalyzes the conversion of glucosamine-6-phosphate to glucosamine-1-phosphate. This is Phosphoglucosamine mutase from Listeria monocytogenes serotype 4b (strain F2365).